Reading from the N-terminus, the 963-residue chain is Ubiquitin carboxyl-terminal hydrolase 4 (963 aa).

Positions 11–122 (PDAETQKSEL…GQQPIVRKVV (112 aa)) constitute a DUSP domain. The necessary for interaction with SART3 stretch occupies residues 27–216 (TLQRGAQWYL…LYLGQVLVIE (190 aa)). A Nuclear export signal motif is present at residues 133 to 141 (VEVYLLELK). The Ubiquitin-like 1 domain occupies 142–226 (LCENSDPTNV…PQNEDGTWPR (85 aa)). The disordered stretch occupies residues 220–255 (EDGTWPRQTLQSKSSTAPSRNFTTSPKSSASPYSSV). Over residues 225–243 (PRQTLQSKSSTAPSRNFTT) the composition is skewed to polar residues. The required for USP4 activation by providing conformational flexibility between the DUSP and catalytic domains stretch occupies residues 229 to 295 (LQSKSSTAPS…SYNCQEPPSS (67 aa)). Positions 244 to 255 (SPKSSASPYSSV) are enriched in low complexity. In terms of domain architecture, USP spans 302-923 (CGLGNLGNTC…AAYVLFYQRR (622 aa)). C311 acts as the Nucleophile in catalysis. Positions 384 to 386 (PQF) are regulates ubiquitin dissociation. Residues 405 to 407 (LHE) form a necessary for interaction with RBL2 region. Position 445 is a phosphoserine (S445). A necessary for interaction with RB1 and RBL2 region spans residues 459 to 463 (LVCPE). Zn(2+) is bound by residues C461 and C464. The Ubiquitin-like 2 domain maps to 483–571 (LKKDRVMEVF…IFVYEVCSTS (89 aa)). The interacts with DUSP and ubiquitin-like 1 domains and is required for USP4 activation stretch occupies residues 485-775 (KDRVMEVFLV…LQPQKKKKTT (291 aa)). A disordered region spans residues 637–698 (DEFGSSPLEP…PSETTQKKIK (62 aa)). Residue S655 is modified to Phosphoserine. Over residues 657 to 666 (EGEDEEEMEH) the composition is skewed to acidic residues. A phosphoserine mark is found at S675 and S680. The Nuclear localization signal motif lies at 767–772 (QPQKKK). Zn(2+) contacts are provided by C799 and C802. The active-site Proton acceptor is H881. Positions 928–963 (YKTPSLSSSGSSDGGTRPSSSQQGLGDDEACSMDTN) are disordered. Positions 932–948 (SLSSSGSSDGGTRPSSS) are enriched in low complexity. Acidic residues predominate over residues 953-963 (GDDEACSMDTN).

It belongs to the peptidase C19 family. USP4 subfamily. Interacts with RB1 (both dephosphorylated and hypophosphorylated forms). Interacts with RBL1 and RBL2. Interacts with ADORA2A (via cytoplasmic C-terminus); the interaction is direct. Interacts with SART3; recruits USP4 to its substrate PRPF3. Post-translationally, phosphorylated at Ser-445 by PKB/AKT1 in response to EGF stimulus, promoting its ability deubiquitinate RHEB. Monoubiquitinated by TRIM21. Ubiquitination does not lead to its proteasomal degradation. Autodeubiquitinated.

The protein localises to the cytoplasm. The protein resides in the nucleus. The enzyme catalyses Thiol-dependent hydrolysis of ester, thioester, amide, peptide and isopeptide bonds formed by the C-terminal Gly of ubiquitin (a 76-residue protein attached to proteins as an intracellular targeting signal).. The completion of the deubiquitinase reaction is mediated by the DUSP and ubiquitin-like 1 domains which promotes the release of ubiquitin from the catalytic site enabling subsequent reactions to occur. Functionally, deubiquitinating enzyme that removes conjugated ubiquitin from target proteins. Deubiquitinates PDPK1. Deubiquitinates TRIM21. Deubiquitinates receptor ADORA2A which increases the amount of functional receptor at the cell surface. Deubiquitinates HAS2. Deubiquitinates RHEB in response to EGF signaling, promoting mTORC1 signaling. May regulate mRNA splicing through deubiquitination of the U4 spliceosomal protein PRPF3. This may prevent its recognition by the U5 component PRPF8 thereby destabilizing interactions within the U4/U6.U5 snRNP. May also play a role in the regulation of quality control in the ER. In Pongo abelii (Sumatran orangutan), this protein is Ubiquitin carboxyl-terminal hydrolase 4 (USP4).